The primary structure comprises 141 residues: Probable mitochondrial pyruvate carrier 1 (141 aa).

2 helical membrane passes run 31-52 (YLCS…AAIL) and 60-82 (LISG…YAWM).

Belongs to the mitochondrial pyruvate carrier (MPC) (TC 2.A.105) family. The functional 150 kDa pyruvate import complex is a heteromer of mpc1 and mpc2.

The protein localises to the mitochondrion. Its subcellular location is the mitochondrion inner membrane. In terms of biological role, mediates the uptake of pyruvate into mitochondria. The chain is Probable mitochondrial pyruvate carrier 1 from Schizosaccharomyces pombe (strain 972 / ATCC 24843) (Fission yeast).